The chain runs to 93 residues: Large ribosomal subunit protein uL23 (93 aa).

Belongs to the universal ribosomal protein uL23 family. As to quaternary structure, part of the 50S ribosomal subunit. Contacts protein L29, and trigger factor when it is bound to the ribosome.

Its function is as follows. One of the early assembly proteins it binds 23S rRNA. One of the proteins that surrounds the polypeptide exit tunnel on the outside of the ribosome. Forms the main docking site for trigger factor binding to the ribosome. The polypeptide is Large ribosomal subunit protein uL23 (Wolinella succinogenes (strain ATCC 29543 / DSM 1740 / CCUG 13145 / JCM 31913 / LMG 7466 / NCTC 11488 / FDC 602W) (Vibrio succinogenes)).